Reading from the N-terminus, the 343-residue chain is Glyceraldehyde-3-phosphate dehydrogenase (343 aa).

Residues 13-14 and Gly-111 contribute to the NAD(+) site; that span reads TI. 140–142 lines the D-glyceraldehyde 3-phosphate pocket; sequence SCN. The active-site Nucleophile is the Cys-141. Position 169 (Arg-169) interacts with NAD(+). Residue 195-196 participates in D-glyceraldehyde 3-phosphate binding; that stretch reads HA. An NAD(+)-binding site is contributed by Gln-303.

This sequence belongs to the glyceraldehyde-3-phosphate dehydrogenase family. As to quaternary structure, homotetramer.

The protein resides in the cytoplasm. It carries out the reaction D-glyceraldehyde 3-phosphate + phosphate + NADP(+) = (2R)-3-phospho-glyceroyl phosphate + NADPH + H(+). The catalysed reaction is D-glyceraldehyde 3-phosphate + phosphate + NAD(+) = (2R)-3-phospho-glyceroyl phosphate + NADH + H(+). It participates in carbohydrate degradation; glycolysis; pyruvate from D-glyceraldehyde 3-phosphate: step 1/5. The chain is Glyceraldehyde-3-phosphate dehydrogenase from Sulfurisphaera tokodaii (strain DSM 16993 / JCM 10545 / NBRC 100140 / 7) (Sulfolobus tokodaii).